Here is a 161-residue protein sequence, read N- to C-terminus: MSGKGAPELSVRNVGDLRVAVIASQWHDKVMDGLVDGALRALHELGIDEPTLLRVPGSFELPVVAKVLAGRGYDAIVALGVVIRGGTPHFDYVCQGVTQGLVQVSVETGVPVGFGVLTCDTEEQALDRAGIEGSSEDKGHEAVTAAVATAATLRSVSEPWR.

5-amino-6-(D-ribitylamino)uracil is bound by residues W26, 58-60 (SFE), and 81-83 (VVI). 86–87 (GT) contacts (2S)-2-hydroxy-3-oxobutyl phosphate. The Proton donor role is filled by H89. F114 lines the 5-amino-6-(D-ribitylamino)uracil pocket. R128 contacts (2S)-2-hydroxy-3-oxobutyl phosphate.

Belongs to the DMRL synthase family.

The catalysed reaction is (2S)-2-hydroxy-3-oxobutyl phosphate + 5-amino-6-(D-ribitylamino)uracil = 6,7-dimethyl-8-(1-D-ribityl)lumazine + phosphate + 2 H2O + H(+). It functions in the pathway cofactor biosynthesis; riboflavin biosynthesis; riboflavin from 2-hydroxy-3-oxobutyl phosphate and 5-amino-6-(D-ribitylamino)uracil: step 1/2. Catalyzes the formation of 6,7-dimethyl-8-ribityllumazine by condensation of 5-amino-6-(D-ribitylamino)uracil with 3,4-dihydroxy-2-butanone 4-phosphate. This is the penultimate step in the biosynthesis of riboflavin. In Streptomyces coelicolor (strain ATCC BAA-471 / A3(2) / M145), this protein is 6,7-dimethyl-8-ribityllumazine synthase.